Here is a 161-residue protein sequence, read N- to C-terminus: Cytochrome c-type biogenesis protein CcmE (161 aa).

Over 1–8 (MNARRKKR) the chain is Cytoplasmic. Residues 9–29 (LALATALIGGVAAIASLLLYA) traverse the membrane as a helical; Signal-anchor for type II membrane protein segment. The Periplasmic segment spans residues 30 to 161 (LNSNLNLFYT…EYDSTQKTGY (132 aa)). Positions 131 and 135 each coordinate heme.

It belongs to the CcmE/CycJ family.

It localises to the cell inner membrane. Its function is as follows. Heme chaperone required for the biogenesis of c-type cytochromes. Transiently binds heme delivered by CcmC and transfers the heme to apo-cytochromes in a process facilitated by CcmF and CcmH. This chain is Cytochrome c-type biogenesis protein CcmE, found in Shewanella loihica (strain ATCC BAA-1088 / PV-4).